The primary structure comprises 197 residues: Fe/S biogenesis protein NfuA (197 aa).

[4Fe-4S] cluster-binding residues include C155 and C158.

Belongs to the NfuA family. Homodimer. [4Fe-4S] cluster is required as a cofactor.

Its function is as follows. Involved in iron-sulfur cluster biogenesis. Binds a 4Fe-4S cluster, can transfer this cluster to apoproteins, and thereby intervenes in the maturation of Fe/S proteins. Could also act as a scaffold/chaperone for damaged Fe/S proteins. This chain is Fe/S biogenesis protein NfuA, found in Pseudomonas savastanoi pv. phaseolicola (strain 1448A / Race 6) (Pseudomonas syringae pv. phaseolicola (strain 1448A / Race 6)).